Here is a 105-residue protein sequence, read N- to C-terminus: MKYAIVEISGRQFWIETGKYYDFNRIPTELGKEITLNRVLLLNNEGEILIGKPYLESVTVKGKILEHLRGRKTLVYKMRPKKKTRKKQGHRQELTRVLIEEIKTN.

The protein belongs to the bacterial ribosomal protein bL21 family. As to quaternary structure, part of the 50S ribosomal subunit.

The protein resides in the plastid. Its subcellular location is the chloroplast. Its function is as follows. This protein binds to 23S rRNA. The protein is Large ribosomal subunit protein bL21c of Trieres chinensis (Marine centric diatom).